Reading from the N-terminus, the 116-residue chain is Small ribosomal subunit protein uS13 (116 aa).

Residues 88-116 (GSRHKKGLPVRGQHTKNNARTRKGPRKQA) are disordered.

It belongs to the universal ribosomal protein uS13 family. Part of the 30S ribosomal subunit. Forms a loose heterodimer with protein S19. Forms two bridges to the 50S subunit in the 70S ribosome.

Functionally, located at the top of the head of the 30S subunit, it contacts several helices of the 16S rRNA. In the 70S ribosome it contacts the 23S rRNA (bridge B1a) and protein L5 of the 50S subunit (bridge B1b), connecting the 2 subunits; these bridges are implicated in subunit movement. Contacts the tRNAs in the A and P-sites. The polypeptide is Small ribosomal subunit protein uS13 (Finegoldia magna (strain ATCC 29328 / DSM 20472 / WAL 2508) (Peptostreptococcus magnus)).